A 139-amino-acid chain; its full sequence is Putative pre-16S rRNA nuclease (139 aa).

It belongs to the YqgF nuclease family.

It localises to the cytoplasm. Could be a nuclease involved in processing of the 5'-end of pre-16S rRNA. In Streptococcus equi subsp. equi (strain 4047), this protein is Putative pre-16S rRNA nuclease.